We begin with the raw amino-acid sequence, 297 residues long: uncharacterized protein (297 aa).

Helical transmembrane passes span 17 to 37 and 48 to 68; these read LALS…KEIF and TISG…GYSI. The PNPLA domain maps to 17–196; the sequence is LALSGGGFYG…TLNYPITLFD (180 aa). The short motif at 21-26 is the GXGXXG element; it reads GGGFYG. The short motif at 51 to 55 is the GXSXG element; the sequence is GVSVG. S53 acts as the Nucleophile in catalysis. N122 carries N-linked (GlcNAc...) asparagine; by host glycosylation. The active-site Proton acceptor is D183. The DGA/G motif lies at 183 to 185; that stretch reads DGG. N239 carries N-linked (GlcNAc...) asparagine; by host glycosylation.

The protein resides in the membrane. Its function is as follows. Probable lipid hydrolase. This is an uncharacterized protein from Acanthamoeba polyphaga mimivirus (APMV).